Consider the following 282-residue polypeptide: Undecaprenyl-diphosphatase (282 aa).

Transmembrane regions (helical) follow at residues 96 to 116 (WMVI…KDII), 123 to 143 (MWIT…AEKW), 198 to 218 (FLLA…DAFA), 229 to 249 (QLAV…AWLL), and 260 to 280 (FAAY…TGML).

It belongs to the UppP family.

It localises to the cell membrane. It catalyses the reaction di-trans,octa-cis-undecaprenyl diphosphate + H2O = di-trans,octa-cis-undecaprenyl phosphate + phosphate + H(+). Its function is as follows. Catalyzes the dephosphorylation of undecaprenyl diphosphate (UPP). Confers resistance to bacitracin. This Corynebacterium diphtheriae (strain ATCC 700971 / NCTC 13129 / Biotype gravis) protein is Undecaprenyl-diphosphatase.